A 368-amino-acid chain; its full sequence is tRNA 2-selenouridine synthase (368 aa).

The Rhodanese domain maps to 12–136; the sequence is FLGDAPLLDT…MRGFLLETIE (125 aa). C95 functions as the S-selanylcysteine intermediate in the catalytic mechanism.

It belongs to the SelU family. As to quaternary structure, monomer.

The catalysed reaction is 5-methylaminomethyl-2-thiouridine(34) in tRNA + selenophosphate + (2E)-geranyl diphosphate + H2O + H(+) = 5-methylaminomethyl-2-selenouridine(34) in tRNA + (2E)-thiogeraniol + phosphate + diphosphate. It carries out the reaction 5-methylaminomethyl-2-thiouridine(34) in tRNA + (2E)-geranyl diphosphate = 5-methylaminomethyl-S-(2E)-geranyl-thiouridine(34) in tRNA + diphosphate. It catalyses the reaction 5-methylaminomethyl-S-(2E)-geranyl-thiouridine(34) in tRNA + selenophosphate + H(+) = 5-methylaminomethyl-2-(Se-phospho)selenouridine(34) in tRNA + (2E)-thiogeraniol. The enzyme catalyses 5-methylaminomethyl-2-(Se-phospho)selenouridine(34) in tRNA + H2O = 5-methylaminomethyl-2-selenouridine(34) in tRNA + phosphate. Functionally, involved in the post-transcriptional modification of the uridine at the wobble position (U34) of tRNA(Lys), tRNA(Glu) and tRNA(Gln). Catalyzes the conversion of 2-thiouridine (S2U-RNA) to 2-selenouridine (Se2U-RNA). Acts in a two-step process involving geranylation of 2-thiouridine (S2U) to S-geranyl-2-thiouridine (geS2U) and subsequent selenation of the latter derivative to 2-selenouridine (Se2U) in the tRNA chain. The polypeptide is tRNA 2-selenouridine synthase (Bordetella bronchiseptica (strain ATCC BAA-588 / NCTC 13252 / RB50) (Alcaligenes bronchisepticus)).